A 75-amino-acid chain; its full sequence is Translational regulator CsrA (75 aa).

The protein belongs to the CsrA/RsmA family. In terms of assembly, homodimer; the beta-strands of each monomer intercalate to form a hydrophobic core, while the alpha-helices form wings that extend away from the core.

The protein resides in the cytoplasm. Functionally, a translational regulator that binds mRNA to regulate translation initiation and/or mRNA stability. Usually binds in the 5'-UTR at or near the Shine-Dalgarno sequence preventing ribosome-binding, thus repressing translation. Its main target seems to be the major flagellin gene, while its function is anatagonized by FliW. The polypeptide is Translational regulator CsrA (Alkaliphilus metalliredigens (strain QYMF)).